The following is a 174-amino-acid chain: Early nodulin-11 (174 aa).

The signal sequence occupies residues Met-1–Ala-25. Positions Ser-28–Phe-174 are disordered. A compositionally biased stretch (pro residues) spans Tyr-53–Lys-65. Low complexity predominate over residues Lys-70–Leu-83. Residues Pro-122–Pro-132 are compositionally biased toward basic residues. Pro residues-rich tracts occupy residues Asn-134–Lys-150 and Lys-159–Phe-174.

It belongs to the plant proline-rich protein superfamily. As to expression, expressed in cotyledons, leaf vasculature, stomatal guard cells and trichomes. In the embryo, expressed in embryo suspensors, the epidermis and underlying tissues of the cotyledons, hypocotyls, and radicle in maturing embryos, and the outer cell layer of the endosperm.

It is found in the secreted. It localises to the cell wall. Functionally, involved in the infection process during the plant-rhizobium interaction. Involved in actinorhizal root nodulation. Involved in symbiotic association with the nitrogen-fixing actinomycete Frankia spp. This chain is Early nodulin-11, found in Medicago truncatula (Barrel medic).